A 529-amino-acid polypeptide reads, in one-letter code: MIVLGLEGTAHTISCGIIDESRILAMESSMYRPKTGGIRPLDAAVHHSEVIDTVISRALEKAKISIHDIDLIGFSMGPGLAPSLRVTATAARTISVLTGKPIIGVNHPLGHIEIGRRVTGAIDPVMLYVSGGNTQVIAHVNGRYRVLGETLDIGIGNMIDKFAREAGIPFPGGPEIEKLAMKGTKLLDLPYSVKGMDTAFSGILTAALQYLKTGQAIEDISYSIQETAFAMLVEVLERALYVSGKDEILMAGGVALNRRLRDMVTNMAREAGIRSYLTDREYCMDNGIMIAQAALLMYKSGVRMSVEETAVNPRFRIDEVDAPWITDASRKDYGKAGAESRIEEVSFHGRPAIRKVRISKSYRNSDLDKKIRYERMRNEFTILRKLKEAGVNSPVVYDFDPFSMSITMQKIPGRMMSAELNEGRTDFLNELGIMIAKMHRAGIAHGDLTVNNIIVNDSVFIIDPSMGKVNAEIEDMAVDIYALEDSIKGLGLDSGSVIGQMLKSYRNNFNLADDVLETVSAIRRRHRYV.

The segment at Met1–Trp324 is kae1. Fe cation contacts are provided by His107, His111, and Tyr128. Residues Tyr128–Gly132, Asp160, Gly173, Glu177, and Asn257 each bind L-threonylcarbamoyladenylate. A Fe cation-binding site is contributed by Asp285. The Protein kinase domain maps to Ser329 to Val529. Residues Lys335–Ile342 and Lys355 contribute to the ATP site. Asp447 acts as the Proton acceptor; for kinase activity in catalysis.

It in the N-terminal section; belongs to the KAE1 / TsaD family. In the C-terminal section; belongs to the protein kinase superfamily. Tyr protein kinase family. BUD32 subfamily. As to quaternary structure, component of the KEOPS complex that consists of Kae1, Bud32, Cgi121 and Pcc1; the whole complex dimerizes. Fe(2+) is required as a cofactor.

The protein resides in the cytoplasm. The catalysed reaction is L-seryl-[protein] + ATP = O-phospho-L-seryl-[protein] + ADP + H(+). It carries out the reaction L-threonyl-[protein] + ATP = O-phospho-L-threonyl-[protein] + ADP + H(+). The enzyme catalyses L-threonylcarbamoyladenylate + adenosine(37) in tRNA = N(6)-L-threonylcarbamoyladenosine(37) in tRNA + AMP + H(+). Required for the formation of a threonylcarbamoyl group on adenosine at position 37 (t(6)A37) in tRNAs that read codons beginning with adenine. Is a component of the KEOPS complex that is probably involved in the transfer of the threonylcarbamoyl moiety of threonylcarbamoyl-AMP (TC-AMP) to the N6 group of A37. The Kae1 domain likely plays a direct catalytic role in this reaction. The Bud32 domain probably displays kinase activity that regulates Kae1 function. This chain is Probable bifunctional tRNA threonylcarbamoyladenosine biosynthesis protein, found in Thermoplasma acidophilum (strain ATCC 25905 / DSM 1728 / JCM 9062 / NBRC 15155 / AMRC-C165).